We begin with the raw amino-acid sequence, 212 residues long: MNLLIMGLPGAGKGTQAAKIVEEFGVAHISTGDMFRAAMANQTEMGRLAKSYIDKGELVPDEVTNGIVKERLAEDDIAEKGFLLDGYPRTIEQAHALDATLEELGLRLDGVINIKVDPSCLVERLSGRIINRKTGETFHKVFNPPVDYKEEDYYQREDDKPETVKRRLDVNMAQEEPILEHYRKLDLVTDIEGNQEITDVFADVEKALLELK.

10 to 15 (GAGKGT) serves as a coordination point for ATP. An NMP region spans residues 30–59 (STGDMFRAAMANQTEMGRLAKSYIDKGELV). Residues Thr-31, Arg-36, 57–59 (ELV), 86–89 (GYPR), and Gln-93 each bind AMP. An LID region spans residues 127–159 (GRIINRKTGETFHKVFNPPVDYKEEDYYQREDD). Residues Arg-128 and 137-138 (TF) each bind ATP. AMP contacts are provided by Arg-156 and Arg-167. An ATP-binding site is contributed by Gln-195.

As to quaternary structure, monomer.

It is found in the cytoplasm. The enzyme catalyses AMP + ATP = 2 ADP. It functions in the pathway purine metabolism; AMP biosynthesis via salvage pathway; AMP from ADP: step 1/1. Its function is as follows. Catalyzes the reversible transfer of the terminal phosphate group between ATP and AMP. Plays an important role in cellular energy homeostasis and in adenine nucleotide metabolism. This Streptococcus pyogenes serotype M6 (strain ATCC BAA-946 / MGAS10394) protein is Adenylate kinase.